The primary structure comprises 156 residues: Ribosomal RNA large subunit methyltransferase H (156 aa).

S-adenosyl-L-methionine-binding positions include L73, G104, and 123 to 128 (LSALTL).

It belongs to the RNA methyltransferase RlmH family. In terms of assembly, homodimer.

The protein resides in the cytoplasm. The catalysed reaction is pseudouridine(1915) in 23S rRNA + S-adenosyl-L-methionine = N(3)-methylpseudouridine(1915) in 23S rRNA + S-adenosyl-L-homocysteine + H(+). Specifically methylates the pseudouridine at position 1915 (m3Psi1915) in 23S rRNA. The chain is Ribosomal RNA large subunit methyltransferase H from Psychromonas ingrahamii (strain DSM 17664 / CCUG 51855 / 37).